The following is a 69-amino-acid chain: Ribosome modulation factor (69 aa).

It belongs to the ribosome modulation factor family.

Its subcellular location is the cytoplasm. Its function is as follows. During stationary phase, converts 70S ribosomes to an inactive dimeric form (100S ribosomes). This Chromohalobacter salexigens (strain ATCC BAA-138 / DSM 3043 / CIP 106854 / NCIMB 13768 / 1H11) protein is Ribosome modulation factor.